Here is a 131-residue protein sequence, read N- to C-terminus: Small ribosomal subunit protein uS8 (131 aa).

Belongs to the universal ribosomal protein uS8 family. In terms of assembly, part of the 30S ribosomal subunit. Contacts proteins S5 and S12.

Functionally, one of the primary rRNA binding proteins, it binds directly to 16S rRNA central domain where it helps coordinate assembly of the platform of the 30S subunit. The chain is Small ribosomal subunit protein uS8 from Paraburkholderia phymatum (strain DSM 17167 / CIP 108236 / LMG 21445 / STM815) (Burkholderia phymatum).